A 465-amino-acid polypeptide reads, in one-letter code: tRNA modification GTPase MnmE (465 aa).

Residues arginine 21, glutamate 85, and lysine 124 each coordinate (6S)-5-formyl-5,6,7,8-tetrahydrofolate. A TrmE-type G domain is found at 220 to 387 (GVPVAIIGET…LQKMLINAAH (168 aa)). Residue asparagine 230 participates in K(+) binding. Residues 230-235 (NAGKST), 249-255 (SDIHGTT), 274-277 (DTAG), and 337-340 (NKAD) contribute to the GTP site. A Mg(2+)-binding site is contributed by serine 234. K(+) contacts are provided by serine 249, isoleucine 251, and threonine 254. Threonine 255 contacts Mg(2+). Lysine 465 contacts (6S)-5-formyl-5,6,7,8-tetrahydrofolate.

It belongs to the TRAFAC class TrmE-Era-EngA-EngB-Septin-like GTPase superfamily. TrmE GTPase family. As to quaternary structure, homodimer. Heterotetramer of two MnmE and two MnmG subunits. K(+) is required as a cofactor.

It is found in the cytoplasm. Its function is as follows. Exhibits a very high intrinsic GTPase hydrolysis rate. Involved in the addition of a carboxymethylaminomethyl (cmnm) group at the wobble position (U34) of certain tRNAs, forming tRNA-cmnm(5)s(2)U34. This is tRNA modification GTPase MnmE from Bacteroides thetaiotaomicron (strain ATCC 29148 / DSM 2079 / JCM 5827 / CCUG 10774 / NCTC 10582 / VPI-5482 / E50).